Reading from the N-terminus, the 200-residue chain is Probable molybdenum cofactor guanylyltransferase (200 aa).

Residues leucine 9 to glycine 11, lysine 21, aspartate 69, and aspartate 100 each bind GTP. Position 100 (aspartate 100) interacts with Mg(2+).

It belongs to the MobA family. It depends on Mg(2+) as a cofactor.

The protein localises to the cytoplasm. The catalysed reaction is Mo-molybdopterin + GTP + H(+) = Mo-molybdopterin guanine dinucleotide + diphosphate. Its function is as follows. Transfers a GMP moiety from GTP to Mo-molybdopterin (Mo-MPT) cofactor (Moco or molybdenum cofactor) to form Mo-molybdopterin guanine dinucleotide (Mo-MGD) cofactor. The sequence is that of Probable molybdenum cofactor guanylyltransferase from Bacillus thuringiensis (strain Al Hakam).